The primary structure comprises 515 residues: Putative ribose/galactose/methyl galactoside import ATP-binding protein (515 aa).

ABC transporter domains are found at residues 25-261 (LEVL…VGRE) and 268-515 (LREK…SGLN). ATP is bound at residue 57–64 (GENGAGKS).

The protein belongs to the ABC transporter superfamily. Carbohydrate importer 2 (CUT2) (TC 3.A.1.2) family.

The protein localises to the cell inner membrane. The enzyme catalyses D-ribose(out) + ATP + H2O = D-ribose(in) + ADP + phosphate + H(+). It catalyses the reaction D-galactose(out) + ATP + H2O = D-galactose(in) + ADP + phosphate + H(+). Functionally, part of an ABC transporter complex involved in carbohydrate import. Could be involved in ribose, galactose and/or methyl galactoside import. Responsible for energy coupling to the transport system. This Pseudomonas fluorescens (strain ATCC BAA-477 / NRRL B-23932 / Pf-5) protein is Putative ribose/galactose/methyl galactoside import ATP-binding protein.